A 403-amino-acid chain; its full sequence is Lissencephaly-1 homolog 1 (403 aa).

The LisH domain occupies 7–38 (QRDELNQAIHQYLLISYQQSAQLFKTEAAVKD). Residues 51–87 (NSIVRLSKRVITLEQQVEQLNEQLAQAQAGKIQFNKS) adopt a coiled-coil conformation. WD repeat units lie at residues 103–142 (GHRA…FEKT), 145–184 (GHTS…CVKT), 187–226 (GHEH…CKKT), 229–270 (EHQE…HQLS), 271–327 (GHEH…NLFT), 330–369 (GHDN…QKKK), and 373–403 (AHDK…WLLS).

Belongs to the WD repeat LIS1/nudF family.

It localises to the cytoplasm. It is found in the cytoskeleton. The protein resides in the microtubule organizing center. The protein localises to the centrosome. Functionally, positively regulates the activity of the minus-end directed microtubule motor protein dynein. May enhance dynein-mediated microtubule sliding by targeting dynein to the microtubule plus end. Required for several dynein- and microtubule-dependent processes. The chain is Lissencephaly-1 homolog 1 from Paramecium tetraurelia.